A 92-amino-acid chain; its full sequence is MTQQGNSGERKPRGKGPKRPRKPKVDPFSIGELEITDYKDVKMLRRFVSDTGKILPRRRTGLSAKHQRRIAQTIKVARQLALLPYTEKLVRK.

Residues 1-28 (MTQQGNSGERKPRGKGPKRPRKPKVDPF) are disordered. Residues 12-22 (PRGKGPKRPRK) show a composition bias toward basic residues.

This sequence belongs to the bacterial ribosomal protein bS18 family. As to quaternary structure, part of the 30S ribosomal subunit. Forms a tight heterodimer with protein bS6.

Binds as a heterodimer with protein bS6 to the central domain of the 16S rRNA, where it helps stabilize the platform of the 30S subunit. This is Small ribosomal subunit protein bS18 from Deinococcus radiodurans (strain ATCC 13939 / DSM 20539 / JCM 16871 / CCUG 27074 / LMG 4051 / NBRC 15346 / NCIMB 9279 / VKM B-1422 / R1).